The chain runs to 187 residues: uncharacterized protein (187 aa).

Positions 1–95 are disordered; sequence MTTMKRSADP…GSTRPSARYG (95 aa). Positions 46–80 are enriched in basic residues; sequence RARRSRGPKRFLGKRNYRRARARKPGKRDRAHSSK.

It localises to the mitochondrion. This is an uncharacterized protein from Arabidopsis thaliana (Mouse-ear cress).